Consider the following 654-residue polypeptide: tRNA 5-methylaminomethyl-2-thiouridine biosynthesis bifunctional protein MnmC (654 aa).

Residues 1 to 236 form a tRNA (mnm(5)s(2)U34)-methyltransferase region; sequence MTDRIVPATL…KRAMLVGEFA (236 aa). The FAD-dependent cmnm(5)s(2)U34 oxidoreductase stretch occupies residues 260–654; sequence IGAGLAGCAA…IRALRRGRVA (395 aa).

In the N-terminal section; belongs to the methyltransferase superfamily. tRNA (mnm(5)s(2)U34)-methyltransferase family. It in the C-terminal section; belongs to the DAO family. It depends on FAD as a cofactor.

It localises to the cytoplasm. The catalysed reaction is 5-aminomethyl-2-thiouridine(34) in tRNA + S-adenosyl-L-methionine = 5-methylaminomethyl-2-thiouridine(34) in tRNA + S-adenosyl-L-homocysteine + H(+). In terms of biological role, catalyzes the last two steps in the biosynthesis of 5-methylaminomethyl-2-thiouridine (mnm(5)s(2)U) at the wobble position (U34) in tRNA. Catalyzes the FAD-dependent demodification of cmnm(5)s(2)U34 to nm(5)s(2)U34, followed by the transfer of a methyl group from S-adenosyl-L-methionine to nm(5)s(2)U34, to form mnm(5)s(2)U34. This is tRNA 5-methylaminomethyl-2-thiouridine biosynthesis bifunctional protein MnmC from Burkholderia thailandensis (strain ATCC 700388 / DSM 13276 / CCUG 48851 / CIP 106301 / E264).